Consider the following 184-residue polypeptide: Photosystem I assembly protein Ycf4 (184 aa).

A run of 2 helical transmembrane segments spans residues 22–42 (FCWA…GISS) and 57–77 (IVFF…LFIS).

It belongs to the Ycf4 family.

The protein resides in the plastid. Its subcellular location is the chloroplast thylakoid membrane. In terms of biological role, seems to be required for the assembly of the photosystem I complex. In Coffea arabica (Arabian coffee), this protein is Photosystem I assembly protein Ycf4.